A 216-amino-acid chain; its full sequence is Mite allergen Lep d 7 (216 aa).

The signal sequence occupies residues Met1 to Ala19.

This sequence belongs to the mite group 7 allergen family.

It is found in the secreted. In Lepidoglyphus destructor (Storage mite), this protein is Mite allergen Lep d 7.